The primary structure comprises 157 residues: Ribosomal RNA large subunit methyltransferase H (157 aa).

Residues L73, G105, and 124–129 (LSQMTF) contribute to the S-adenosyl-L-methionine site.

Belongs to the RNA methyltransferase RlmH family. In terms of assembly, homodimer.

It is found in the cytoplasm. It catalyses the reaction pseudouridine(1915) in 23S rRNA + S-adenosyl-L-methionine = N(3)-methylpseudouridine(1915) in 23S rRNA + S-adenosyl-L-homocysteine + H(+). In terms of biological role, specifically methylates the pseudouridine at position 1915 (m3Psi1915) in 23S rRNA. The sequence is that of Ribosomal RNA large subunit methyltransferase H from Flavobacterium psychrophilum (strain ATCC 49511 / DSM 21280 / CIP 103535 / JIP02/86).